A 211-amino-acid polypeptide reads, in one-letter code: Thiamine-phosphate synthase (211 aa).

4-amino-2-methyl-5-(diphosphooxymethyl)pyrimidine contacts are provided by residues 43–47 (QLRDK) and Asn-75. Mg(2+) contacts are provided by Asp-76 and Asp-95. Residue Ser-114 participates in 4-amino-2-methyl-5-(diphosphooxymethyl)pyrimidine binding. Residue 140–142 (TAS) coordinates 2-[(2R,5Z)-2-carboxy-4-methylthiazol-5(2H)-ylidene]ethyl phosphate. Residue Lys-143 participates in 4-amino-2-methyl-5-(diphosphooxymethyl)pyrimidine binding. Residues Gly-170 and 190–191 (IS) each bind 2-[(2R,5Z)-2-carboxy-4-methylthiazol-5(2H)-ylidene]ethyl phosphate.

It belongs to the thiamine-phosphate synthase family. Mg(2+) is required as a cofactor.

The catalysed reaction is 2-[(2R,5Z)-2-carboxy-4-methylthiazol-5(2H)-ylidene]ethyl phosphate + 4-amino-2-methyl-5-(diphosphooxymethyl)pyrimidine + 2 H(+) = thiamine phosphate + CO2 + diphosphate. It carries out the reaction 2-(2-carboxy-4-methylthiazol-5-yl)ethyl phosphate + 4-amino-2-methyl-5-(diphosphooxymethyl)pyrimidine + 2 H(+) = thiamine phosphate + CO2 + diphosphate. The enzyme catalyses 4-methyl-5-(2-phosphooxyethyl)-thiazole + 4-amino-2-methyl-5-(diphosphooxymethyl)pyrimidine + H(+) = thiamine phosphate + diphosphate. It functions in the pathway cofactor biosynthesis; thiamine diphosphate biosynthesis; thiamine phosphate from 4-amino-2-methyl-5-diphosphomethylpyrimidine and 4-methyl-5-(2-phosphoethyl)-thiazole: step 1/1. Its function is as follows. Condenses 4-methyl-5-(beta-hydroxyethyl)thiazole monophosphate (THZ-P) and 2-methyl-4-amino-5-hydroxymethyl pyrimidine pyrophosphate (HMP-PP) to form thiamine monophosphate (TMP). The polypeptide is Thiamine-phosphate synthase (Coprothermobacter proteolyticus (strain ATCC 35245 / DSM 5265 / OCM 4 / BT)).